Reading from the N-terminus, the 510-residue chain is Cytochrome P450 monooxygenase btcC (510 aa).

Residues 1-21 traverse the membrane as a helical segment; sequence MSFPGVIFVVSFFPLLMGIAV. Position 446 (Cys-446) interacts with heme.

It belongs to the cytochrome P450 family. Heme serves as cofactor.

It is found in the membrane. The protein operates within secondary metabolite biosynthesis; terpenoid biosynthesis. Functionally, cytochrome P450 monooxygenase; part of the gene cluster that mediates the biosynthesis of betaestacins. The bifunctional terpene synthase btcA converts isopentenyl diphosphate (IPP) and dimethylallyl diphosphate (DMAPP) into the sesterterpene betaestacin I. The C-terminal prenyltransferase (PT) domain of btcA catalyzes formation of GFPP, whereas the N-terminal terpene cyclase (TC) domain catalyzes the cyclization of GFPP into betaestacin I. The cytochrome P450 monooxygenase btcB is then responsible for the six-step oxidation of betaestacin I to yield betaestacin II. The roles of the cytochrome P450 monooxygenase btcC and the alpha-ketoglutarate-dependent dioxygenase btcD have not been identified yet. The chain is Cytochrome P450 monooxygenase btcC from Neocamarosporium betae (Beet black rot fungus).